The following is a 510-amino-acid chain: Glycogen synthase (510 aa).

Residue Lys-18 coordinates ADP-alpha-D-glucose.

Belongs to the glycosyltransferase 1 family. Bacterial/plant glycogen synthase subfamily.

The catalysed reaction is [(1-&gt;4)-alpha-D-glucosyl](n) + ADP-alpha-D-glucose = [(1-&gt;4)-alpha-D-glucosyl](n+1) + ADP + H(+). It participates in glycan biosynthesis; glycogen biosynthesis. Functionally, synthesizes alpha-1,4-glucan chains using ADP-glucose. In Bordetella bronchiseptica (strain ATCC BAA-588 / NCTC 13252 / RB50) (Alcaligenes bronchisepticus), this protein is Glycogen synthase.